The following is a 1374-amino-acid chain: Mitogen-activated protein kinase kinase kinase 5 (1374 aa).

A disordered region spans residues 68 to 87 (PAATSSSSATRGRGSSVGGG). Residues 69–81 (AATSSSSATRGRG) show a composition bias toward low complexity. Arg-78 and Arg-80 each carry asymmetric dimethylarginine; by PRMT1. Position 83 is a phosphoserine; by PIM1 and PKB/AKT1 (Ser-83). The tract at residues 649-1374 (MVNTITEEKG…AIIDFRNKQT (726 aa)) is interaction with PPIA/CYPA. The region spanning 680 to 938 (NGDRVVLGKG…ANDLLVDEFL (259 aa)) is the Protein kinase domain. ATP-binding positions include 686-694 (LGKGTYGIV) and Lys-709. Tyr-718 is subject to Phosphotyrosine. The active-site Proton acceptor is the Asp-803. The residue at position 813 (Thr-813) is a Phosphothreonine; by autocatalysis. Thr-838 carries the post-translational modification Phosphothreonine; by autocatalysis, MELK and MAP3K6. Position 842 is a phosphothreonine; by autocatalysis (Thr-842). Ser-958 is modified (phosphoserine). The residue at position 966 (Ser-966) is a Phosphoserine; by autocatalysis. Ser-1029 and Ser-1033 each carry phosphoserine. The disordered stretch occupies residues 1182-1209 (SESDTADQEDLDVEDDHEEQPSNQTVRR). Over residues 1185–1199 (DTADQEDLDVEDDHE) the composition is skewed to acidic residues. A coiled-coil region spans residues 1245–1285 (LGRMKIETNRLLEELVRKEKELQALLHRAIEEKDQEIKHLK).

This sequence belongs to the protein kinase superfamily. STE Ser/Thr protein kinase family. MAP kinase kinase kinase subfamily. In terms of assembly, homodimer when inactive. Binds both upstream activators and downstream substrates in multimolecular complexes. Part of a cytoplasmic complex made of HIPK1, DAB2IP and MAP3K5 in response to TNF. This complex formation promotes MAP3K5-JNK activation and subsequent apoptosis. Interacts with SOCS1 which recognizes phosphorylation of Tyr-718 and induces MAP3K5/ASK1 degradation in endothelial cells. Interacts with the 14-3-3 family proteins such as YWHAB, YWHAE, YWHAQ, YWHAH, YWHAZ and SFN. Interacts with ARRB2, BIRC2, DAB2IP, IGF1R, MAP3K6/ASK2, PGAM5, PIM1, PPP5C, SOCS1, STUB1, TRAF2, TRAF6 and TXN. Interacts with ERN1 in a TRAF2-dependent manner. Interacts with calcineurin subunit PPP3R1. Interacts with PPM1L. Interacts (via N-terminus) with RAF1 and this interaction inhibits the proapoptotic function of MAP3K5. Interacts with DAB2IP (via N-terminus C2 domain); the interaction occurs in a TNF-alpha-dependent manner. Interacts with DUSP13A; may positively regulate apoptosis. Interacts with DAXX. Interacts with RC3H2. Interacts with PPIA/CYPA. Interacts with PRMT1; the interaction results in MAP3K5 methylation by PRMT1 which inhibits MAP3K5 activation. Interacts with TRAF2; the interaction is inhibited by PRMT1. Interacts with TRIM48. (Microbial infection) Interacts with HIV-1 Nef; this interaction inhibits MAP3K5 signaling. The cofactor is Mg(2+). In terms of processing, phosphorylated at Thr-838 through autophosphorylation and by MAP3K6/ASK2 which leads to activation. Thr-838 is dephosphorylated by PPP5C. Ser-83 and Ser-1033 are inactivating phosphorylation sites, the former of which is phosphorylated by AKT1. Phosphorylated at Ser-966 which induces association of MAP3K5/ASK1 with the 14-3-3 family proteins and suppresses MAP3K5/ASK1 activity. Calcineurin (CN) dephosphorylates this site. Also dephosphorylated and activated by PGAM5. Phosphorylation at Ser-966 in response to oxidative stress is negatively regulated by PPIA/CYPA. Ubiquitinated. Tumor necrosis factor (TNF) induces TNFR2-dependent ubiquitination, leading to proteasomal degradation. Ubiquitinated by RC3H2 in a TRIM48-dependent manner. Post-translationally, methylation at Arg-78 and Arg-80 by PRMT1 promotes association of MAP3K5 with thioredoxin and negatively regulates MAP3K5 association with TRAF2, inhibiting MAP3K5 activation. Methylation is blocked by ubiquitination of PRMT1 by TRIM48. As to expression, abundantly expressed in heart and pancreas.

The protein localises to the cytoplasm. It localises to the endoplasmic reticulum. It carries out the reaction L-seryl-[protein] + ATP = O-phospho-L-seryl-[protein] + ADP + H(+). The enzyme catalyses L-threonyl-[protein] + ATP = O-phospho-L-threonyl-[protein] + ADP + H(+). With respect to regulation, activated by various stressors, including oxidative stress, endoplasmic reticulum stress, and calcium overload, as well as by receptor-mediated inflammatory signals, such as the tumor necrosis factor (TNF) and lipopolysaccharide (LPS). Homophilic association of MAP3K5/ASK1 through the C-terminal coiled-coil domains and the heteromeric complex formation of MAP3K5/ASK1 with the reduced form of thioredoxin (TXN), constitutes an inactive form of the kinase. Upon ROS-induced dissociation of TXN from MAP3K5/ASK1, TRAF2 and TRAF6 are reciprocally recruited to MAP3K5/ASK1 and form the active MAP3K5/ASK1 signalosome, in which TRAF2 and TRAF6 appear to facilitate the active configuration of MAP3K5/ASK1. MAP3K5/ASK1 activity is also regulated through several phosphorylation and dephosphorylation events. Thr-838 is an activating phosphorylation site that is autophosphorylated and phosphorylated by MAP3K6/ASK2 and dephosphorylated by PPP5C. Ser-83 and Ser-1033 are inactivating phosphorylation sites, the former of which is phosphorylated by AKT1. Phosphorylation of Ser-966 induces association of MAP3K5/ASK1 with the 14-3-3 family proteins, which suppresses MAP3K5/ASK1 activity. Calcium/calmodulin-activated protein phosphatase calcineurin (PPP3CA) has been shown to directly dephosphorylate this site. SOCS1 binds to ASK1 by recognizing phosphorylation of Tyr-718 and induces MAP3K5/ASK1 degradation in endothelial cells. Also dephosphorylated and activated by PGAM5. Contains an N-terminal autoinhibitory domain. Once activated targeted for proteasomal degradation by RC3H2-mediated ubiquitination. Serine/threonine kinase which acts as an essential component of the MAP kinase signal transduction pathway. Plays an important role in the cascades of cellular responses evoked by changes in the environment. Mediates signaling for determination of cell fate such as differentiation and survival. Plays a crucial role in the apoptosis signal transduction pathway through mitochondria-dependent caspase activation. MAP3K5/ASK1 is required for the innate immune response, which is essential for host defense against a wide range of pathogens. Mediates signal transduction of various stressors like oxidative stress as well as by receptor-mediated inflammatory signals, such as the tumor necrosis factor (TNF) or lipopolysaccharide (LPS). Once activated, acts as an upstream activator of the MKK/JNK signal transduction cascade and the p38 MAPK signal transduction cascade through the phosphorylation and activation of several MAP kinase kinases like MAP2K4/SEK1, MAP2K3/MKK3, MAP2K6/MKK6 and MAP2K7/MKK7. These MAP2Ks in turn activate p38 MAPKs and c-jun N-terminal kinases (JNKs). Both p38 MAPK and JNKs control the transcription factors activator protein-1 (AP-1). This chain is Mitogen-activated protein kinase kinase kinase 5 (MAP3K5), found in Homo sapiens (Human).